The following is a 181-amino-acid chain: NADH-quinone oxidoreductase subunit B (181 aa).

Residues Cys-45, Cys-46, Cys-111, and Cys-140 each coordinate [4Fe-4S] cluster.

This sequence belongs to the complex I 20 kDa subunit family. As to quaternary structure, NDH-1 is composed of 14 different subunits. Subunits NuoB, C, D, E, F, and G constitute the peripheral sector of the complex. Requires [4Fe-4S] cluster as cofactor.

Its subcellular location is the cell inner membrane. The enzyme catalyses a quinone + NADH + 5 H(+)(in) = a quinol + NAD(+) + 4 H(+)(out). Functionally, NDH-1 shuttles electrons from NADH, via FMN and iron-sulfur (Fe-S) centers, to quinones in the respiratory chain. The immediate electron acceptor for the enzyme in this species is believed to be a menaquinone. Couples the redox reaction to proton translocation (for every two electrons transferred, four hydrogen ions are translocated across the cytoplasmic membrane), and thus conserves the redox energy in a proton gradient. This chain is NADH-quinone oxidoreductase subunit B, found in Flavobacterium psychrophilum (strain ATCC 49511 / DSM 21280 / CIP 103535 / JIP02/86).